We begin with the raw amino-acid sequence, 985 residues long: Rho guanine nucleotide exchange factor 2 (985 aa).

The segment at 1–32 (MSRIESLTRARIDRSKEQATKTREKEKMKEAK) is disordered. The segment at 39 to 86 (GHLFTTISVSGMTMCYACNKSITAKEALICPTCNVTIHNRCKDTLANC) adopts a Phorbol-ester/DAG-type zinc-finger fold. Residues S109, S122, S129, S133, and S137 each carry the phosphoserine modification. Residues 131 to 161 (RQSLLGSRRGLSSLSLAKSVSTTNIAGHFND) are interaction with DYNLT1. S143 is modified (phosphoserine; by PAK4). 5 positions are modified to phosphoserine: S151, S163, S172, S174, and S177. One can recognise a DH domain in the interval 236 to 433 (KKQDVIYELI…KELLSNVDQD (198 aa)). Position 354 is an N6-acetyllysine (K354). In terms of domain architecture, PH spans 473–572 (KLIHDGCLLW…WIRVIQQSVR (100 aa)). The stretch at 591 to 615 (LRRIKTKLQQKNQALVELLQMNVEL) forms a coiled coil. Residues S646 and S649 each carry the phosphoserine modification. T680 is modified (phosphothreonine; by MAPK1 or MAPK3). Phosphoserine is present on residues S692, S710, and S781. The residue at position 795 (T795) is a Phosphothreonine. Residues 797-866 (EKQATELALL…RQLAALGQNE (70 aa)) are a coiled coil. Phosphoserine is present on S885. Disordered stretches follow at residues 890-909 (DALY…DRLD) and 918-985 (HRPF…ASES). Y893 carries the phosphotyrosine modification. Residue S895 is modified to Phosphoserine; by PAK4. Residues 919–938 (RPFDDREAQELGSPEDRLQD) show a composition bias toward basic and acidic residues. Residues S931, S939, and S940 each carry the phosphoserine modification. A compositionally biased stretch (acidic residues) spans 940–949 (SDPDTCSEEE). T944 carries the phosphothreonine modification. A phosphoserine mark is found at S946, S951, S952, S955, and S959.

Found in a complex composed at least of ARHGEF2, NOD2 and RIPK2. Interacts with RIPK2; the interaction mediates tyrosine phosphorylation of RIPK2 by Src kinase CSK. Interacts with RIPK1 and RIPK3. Interacts with YWHAZ/14-3-3 zeta; when phosphorylated at Ser-885. Interacts with the kinases PAK4, AURKA and MAPK1. Interacts with RHOA and RAC1. Interacts with NOD1. Interacts (via the N- terminal zinc finger) with CAPN6 (via domain II). Interacts with DYNLT1. In terms of processing, phosphorylation of Ser-885 by PAK1 induces binding to protein YWHAZ, promoting its relocation to microtubules and the inhibition of its activity. Phosphorylated by AURKA and CDK1 during mitosis, which negatively regulates its activity. Phosphorylation by MAPK1 or MAPK3 increases nucleotide exchange activity. Phosphorylation by PAK4 releases GEF-H1 from the microtubules. Phosphorylated on serine, threonine and tyrosine residues in a RIPK2-dependent manner.

The protein resides in the cytoplasm. It localises to the cytoskeleton. It is found in the cell junction. The protein localises to the tight junction. Its subcellular location is the golgi apparatus. The protein resides in the spindle. It localises to the cytoplasmic vesicle. In terms of biological role, activates Rho-GTPases by promoting the exchange of GDP for GTP. May be involved in epithelial barrier permeability, cell motility and polarization, dendritic spine morphology, antigen presentation, leukemic cell differentiation, cell cycle regulation, innate immune response, and cancer. Binds Rac-GTPases, but does not seem to promote nucleotide exchange activity toward Rac-GTPases. May stimulate instead the cortical activity of Rac. Inactive toward CDC42, TC10, or Ras-GTPases. Forms an intracellular sensing system along with NOD1 for the detection of microbial effectors during cell invasion by pathogens. Involved in innate immune signaling transduction pathway promoting cytokine IL6/interleukin-6 and TNF-alpha secretion in macrophage upon stimulation by bacterial peptidoglycans; acts as a signaling intermediate between NOD2 receptor and RIPK2 kinase. Contributes to the tyrosine phosphorylation of RIPK2 through Src tyrosine kinase leading to NF-kappaB activation by NOD2. Overexpression activates Rho-, but not Rac-GTPases, and increases paracellular permeability. Involved in neuronal progenitor cell division and differentiation. Involved in the migration of precerebellar neurons. The sequence is that of Rho guanine nucleotide exchange factor 2 (Arhgef2) from Rattus norvegicus (Rat).